The primary structure comprises 137 residues: Nucleoside diphosphate kinase (137 aa).

ATP contacts are provided by Lys11, Phe59, Arg87, Thr93, Arg104, and Asn114. The active-site Pros-phosphohistidine intermediate is the His117.

Belongs to the NDK family. As to quaternary structure, homotetramer. Mg(2+) serves as cofactor.

It localises to the cytoplasm. It carries out the reaction a 2'-deoxyribonucleoside 5'-diphosphate + ATP = a 2'-deoxyribonucleoside 5'-triphosphate + ADP. The enzyme catalyses a ribonucleoside 5'-diphosphate + ATP = a ribonucleoside 5'-triphosphate + ADP. Its function is as follows. Major role in the synthesis of nucleoside triphosphates other than ATP. The ATP gamma phosphate is transferred to the NDP beta phosphate via a ping-pong mechanism, using a phosphorylated active-site intermediate. This chain is Nucleoside diphosphate kinase, found in Parafrankia sp. (strain EAN1pec).